A 294-amino-acid polypeptide reads, in one-letter code: Flavin-dependent thymidylate synthase (294 aa).

A ThyX domain is found at 27–250 (GFIRVIDYMG…PFVYEAFEEY (224 aa)). FAD-binding positions include T73, 96–98 (RHR), and E104. Residues 93-96 (QWIR), 104-108 (EYSAR), and R189 contribute to the dUMP site. The short motif at 96–106 (RHRTASVNEYS) is the ThyX motif element. FAD-binding positions include 205-207 (NLH) and H211. Position 216 (R216) interacts with dUMP. R216 serves as the catalytic Involved in ionization of N3 of dUMP, leading to its activation.

The protein belongs to the thymidylate synthase ThyX family. Homotetramer. Requires FAD as cofactor.

It catalyses the reaction dUMP + (6R)-5,10-methylene-5,6,7,8-tetrahydrofolate + NADPH + H(+) = dTMP + (6S)-5,6,7,8-tetrahydrofolate + NADP(+). Its pathway is pyrimidine metabolism; dTTP biosynthesis. In terms of biological role, catalyzes the reductive methylation of 2'-deoxyuridine-5'-monophosphate (dUMP) to 2'-deoxythymidine-5'-monophosphate (dTMP) while utilizing 5,10-methylenetetrahydrofolate (mTHF) as the methyl donor, and NADPH and FADH(2) as the reductant. This is Flavin-dependent thymidylate synthase from Rickettsia conorii (strain ATCC VR-613 / Malish 7).